The sequence spans 239 residues: MPLGHIMRLDLEKIALEYIVPCLHEVGFCYLDNFLGEVVGDCVLERVKQLHYNGALRDGQLAGPRAGVSKRHLRGDQITWIGGNEEGCEAINFLLSLIDRLVLYCGSRLGKYYVKERSKAMVACYPGNGTGYVRHVDNPNGDGRCITCIYYLNKNWDAKLHGGVLRIFPEGKSFVADVEPIFDRLLFFWSDRRNPHEVQPSYATRYAMTVWYFDAEERAEAKKKFRNLTRKTESALAKD.

The beta(2)beta(3) 'finger-like' loop stretch occupies residues A62 to L73. A required for interaction with ADRB2 region spans residues C88–Y104. The Fe2OG dioxygenase domain occupies E116 to D214. The Fe cation site is built by H135, D137, and H196. R205 provides a ligand contact to 2-oxoglutarate.

As to quaternary structure, interacts with ADRB2; the interaction hydroxylates ADRB2 facilitating its ubiquitination by the VHL-E3 ligase complex. Interacts with PKM; the interaction hydroxylates PKM in hypoxia. Interacts with WDR83; the interaction leads to almost complete elimination of HIF-mediated reporter activity. Interacts with BCL2 (via its BH4 domain); the interaction disrupts the BAX-BCL4 complex inhibiting the anti-apoptotic activity of BCL2. Interacts with LIMD1, WTIP and AJUBA. Fe(2+) serves as cofactor. L-ascorbate is required as a cofactor. Post-translationally, ubiquitinated by SIAH1 and/or SIAH2 in response to the unfolded protein response (UPR), leading to its degradation. As to expression, highly expressed in cardiac and smooth muscle. Also high expression in brain, skeletal muscle and kidney. Low levels in lung.

Its subcellular location is the nucleus. The protein localises to the cytoplasm. It catalyses the reaction L-prolyl-[protein] + 2-oxoglutarate + O2 = trans-4-hydroxy-L-prolyl-[protein] + succinate + CO2. The enzyme catalyses L-prolyl-[hypoxia-inducible factor alpha subunit] + 2-oxoglutarate + O2 = trans-4-hydroxy-L-prolyl-[hypoxia-inducible factor alpha subunit] + succinate + CO2. Prolyl hydroxylase that mediates hydroxylation of proline residues in target proteins, such as PKM, TELO2, ATF4 and HIF1A. Target proteins are preferentially recognized via a LXXLAP motif. Cellular oxygen sensor that catalyzes, under normoxic conditions, the post-translational formation of 4-hydroxyproline in hypoxia-inducible factor (HIF) alpha proteins. Hydroxylates a specific proline found in each of the oxygen-dependent degradation (ODD) domains (N-terminal, NODD, and C-terminal, CODD) of HIF1A. Also hydroxylates HIF2A. Has a preference for the CODD site for both HIF1A and HIF2A. Hydroxylation on the NODD site by EGLN3 appears to require prior hydroxylation on the CODD site. Hydroxylated HIFs are then targeted for proteasomal degradation via the von Hippel-Lindau ubiquitination complex. Under hypoxic conditions, the hydroxylation reaction is attenuated allowing HIFs to escape degradation resulting in their translocation to the nucleus, heterodimerization with HIF1B, and increased expression of hypoxy-inducible genes. ELGN3 is the most important isozyme in limiting physiological activation of HIFs (particularly HIF2A) in hypoxia. Also hydroxylates PKM in hypoxia, limiting glycolysis. Under normoxia, hydroxylates and regulates the stability of ADRB2. Regulator of cardiomyocyte and neuronal apoptosis. In cardiomyocytes, inhibits the anti-apoptotic effect of BCL2 by disrupting the BAX-BCL2 complex. In neurons, has a NGF-induced proapoptotic effect, probably through regulating CASP3 activity. Also essential for hypoxic regulation of neutrophilic inflammation. Plays a crucial role in DNA damage response (DDR) by hydroxylating TELO2, promoting its interaction with ATR which is required for activation of the ATR/CHK1/p53 pathway. Also mediates hydroxylation of ATF4, leading to decreased protein stability of ATF4. The chain is Prolyl hydroxylase EGLN3 from Mus musculus (Mouse).